A 568-amino-acid chain; its full sequence is MDSKTVGILGGGQLGRMIVEAAHRLNIKTVILDAAKSPAKQINALDDHVDGSFTNYDSIVKLAEKADVLTVEIEHVDVDALIKVQEKFPKVEIYPLPETIRLIQDKYLQKNHLIKHDVAVTESVAVETNTVDDLLHIGEKFGYPYMLKSRTLAYDGRGNFVVKDKSYCEKALEFLKDRPLYAEKWCPFTKELAVMVVRSLEGEVFAYPTVETIHENNICHLVYAPARIPDTLAKKASILAKNAVKSFLGCGIFGVEMFLLENNELLINEIAPRPHNSGHYTIDACVTSQFEAHVRAVTGLPMPKGFTEFSTSITNAIMLNVLGDKATPNKELEICRRALETPHASVYLYGKTTRPERKMGHINVVTSSMQDAESRLSYILGDTTEIPKSLATDKESPLVGIIMGSDSDLPVMAVGARILKQFGVPFELTIVSAHRTPHRMSEYAIEAPKRGLKCIIAGAGGAAHLPGMVAAMTPLPVIGVPVKGSTLDGVDSLHSIVQMPRGIPVATVAINNSTNAALLAIRILGAYDSKWLTEMNQYMLNMETEVLGKAETLEEIGYEDYLTDKLKK.

Residues 110–298 (KNHLIKHDVA…QFEAHVRAVT (189 aa)) enclose the ATP-grasp domain. Residue 138-193 (GEKFGYPYMLKSRTLAYDGRGNFVVKDKSYCEKALEFLKDRPLYAEKWCPFTKELA) coordinates ATP.

In the C-terminal section; belongs to the AIR carboxylase family. Class I subfamily.

It catalyses the reaction 5-amino-1-(5-phospho-D-ribosyl)imidazole-4-carboxylate + H(+) = 5-amino-1-(5-phospho-beta-D-ribosyl)imidazole + CO2. It participates in purine metabolism; IMP biosynthesis via de novo pathway; 5-amino-1-(5-phospho-D-ribosyl)imidazole-4-carboxylate from 5-amino-1-(5-phospho-D-ribosyl)imidazole (carboxylase route): step 1/1. The sequence is that of Phosphoribosylaminoimidazole carboxylase (ADE2) from Candida albicans (strain SC5314 / ATCC MYA-2876) (Yeast).